We begin with the raw amino-acid sequence, 473 residues long: 3-isopropylmalate dehydratase large subunit (473 aa).

[4Fe-4S] cluster is bound by residues cysteine 351, cysteine 414, and cysteine 417.

Belongs to the aconitase/IPM isomerase family. LeuC type 1 subfamily. As to quaternary structure, heterodimer of LeuC and LeuD. The cofactor is [4Fe-4S] cluster.

The enzyme catalyses (2R,3S)-3-isopropylmalate = (2S)-2-isopropylmalate. It participates in amino-acid biosynthesis; L-leucine biosynthesis; L-leucine from 3-methyl-2-oxobutanoate: step 2/4. In terms of biological role, catalyzes the isomerization between 2-isopropylmalate and 3-isopropylmalate, via the formation of 2-isopropylmaleate. The sequence is that of 3-isopropylmalate dehydratase large subunit from Variovorax paradoxus (strain S110).